Here is a 345-residue protein sequence, read N- to C-terminus: MNYKLFSPYTIKDVTLKNRIVMSPMCMYSSKNEDGQITNFHLIHYGTRAAGQVGLVMIEATAVLPEGRISNKDLGIWDDSLIEGLHKATTFIHDNGAKAAIQLAHAGRKAELETDALAPSAIPFNETMKMPIEMSKHQIKDTVLAFQQAAVRSKQAGFDVIEIHGAHGYLINEFLSPLTNKRTDEYGGSPENRYRFLREIIESINEVWNGPLFVRISANDYHPDGLTVQDYVQYTKWMKEQGVDLIDCSSGAVVPARIDVYPGYQVQYAKHIKEHANIATGAVGLITTGAQAEQILNNNEADLIFIGRELLRNPYFPRIAANELGFELEEPYQYERAPGKISTNK.

Residue 23–26 coordinates FMN; the sequence is SPMC. A substrate-binding site is contributed by Y28. FMN is bound by residues A60 and Q102. A substrate-binding site is contributed by 164–167; sequence HGAH. Residues R215 and 307–308 each bind FMN; that span reads GR.

It belongs to the NADH:flavin oxidoreductase/NADH oxidase family. NamA subfamily. As to quaternary structure, homotetramer. FMN is required as a cofactor.

It catalyses the reaction A + NADPH + H(+) = AH2 + NADP(+). Its function is as follows. Catalyzes the reduction of the double bond of an array of alpha,beta-unsaturated aldehydes and ketones. It also reduces the nitro group of nitroester and nitroaromatic compounds. It could have a role in detoxification processes. This Bacillus cereus (strain Q1) protein is NADPH dehydrogenase.